A 128-amino-acid polypeptide reads, in one-letter code: Holin-like protein CidA (128 aa).

4 consecutive transmembrane segments (helical) span residues 4 to 24 (LLLTVIQIALLFIFARLINWV), 27 to 46 (ALHINIPGSIIGIVILFTLL), 59 to 79 (GAAWLLGELLLFFIPSAVGVI), and 88 to 108 (FGVSILLVVVISTFVVMVSTG).

Belongs to the CidA/LrgA family. CidA subfamily.

It is found in the cell membrane. Functionally, increases the activity of extracellular murein hydrolases possibly by mediating their export via hole formation. Inhibited by the antiholin-like proteins LrgAB. In an unstressed cell, the LrgAB products probably inhibit the function of the CidA protein. When a cell is stressed by the addition of antibiotics or by other factors in the environment, CidA possibly oligomerizes within the bacterial cell membrane, creating lesions that disrupt the proton motive force, which in turn results in loss of cell viability. These lesions are also hypothesized to regulate the subsequent cell lysis by either allowing the murein hydrolases access to the cell wall substrate and/or regulating their activity by a possible change in the cell wall pH that results from loss of membrane potential. This chain is Holin-like protein CidA, found in Bacillus velezensis (strain DSM 23117 / BGSC 10A6 / LMG 26770 / FZB42) (Bacillus amyloliquefaciens subsp. plantarum).